We begin with the raw amino-acid sequence, 172 residues long: Shikimate kinase (172 aa).

G14–T19 contacts ATP. Position 18 (S18) interacts with Mg(2+). Residues D36, R60, and G82 each contribute to the substrate site. Residue R120 participates in ATP binding. R140 is a substrate binding site. Position 157 (Q157) interacts with ATP.

It belongs to the shikimate kinase family. Monomer. The cofactor is Mg(2+).

Its subcellular location is the cytoplasm. It carries out the reaction shikimate + ATP = 3-phosphoshikimate + ADP + H(+). It functions in the pathway metabolic intermediate biosynthesis; chorismate biosynthesis; chorismate from D-erythrose 4-phosphate and phosphoenolpyruvate: step 5/7. In terms of biological role, catalyzes the specific phosphorylation of the 3-hydroxyl group of shikimic acid using ATP as a cosubstrate. This chain is Shikimate kinase, found in Aeromonas salmonicida (strain A449).